The chain runs to 243 residues: Type III pantothenate kinase (243 aa).

7 to 14 (DLGNSRFK) contacts ATP. Residues Tyr91 and 98 to 101 (GVDR) each bind substrate. The active-site Proton acceptor is Asp100. Thr122 contacts ATP. Residue Thr172 coordinates substrate.

It belongs to the type III pantothenate kinase family. As to quaternary structure, homodimer. NH4(+) is required as a cofactor. It depends on K(+) as a cofactor.

The protein resides in the cytoplasm. It catalyses the reaction (R)-pantothenate + ATP = (R)-4'-phosphopantothenate + ADP + H(+). It participates in cofactor biosynthesis; coenzyme A biosynthesis; CoA from (R)-pantothenate: step 1/5. Functionally, catalyzes the phosphorylation of pantothenate (Pan), the first step in CoA biosynthesis. In Stenotrophomonas maltophilia (strain K279a), this protein is Type III pantothenate kinase.